The chain runs to 308 residues: Methionyl-tRNA formyltransferase (308 aa).

(6S)-5,6,7,8-tetrahydrofolate is bound at residue Ser109–Pro112.

It belongs to the Fmt family.

It catalyses the reaction L-methionyl-tRNA(fMet) + (6R)-10-formyltetrahydrofolate = N-formyl-L-methionyl-tRNA(fMet) + (6S)-5,6,7,8-tetrahydrofolate + H(+). Its function is as follows. Attaches a formyl group to the free amino group of methionyl-tRNA(fMet). The formyl group appears to play a dual role in the initiator identity of N-formylmethionyl-tRNA by promoting its recognition by IF2 and preventing the misappropriation of this tRNA by the elongation apparatus. This chain is Methionyl-tRNA formyltransferase, found in Methylobacillus flagellatus (strain ATCC 51484 / DSM 6875 / VKM B-1610 / KT).